A 450-amino-acid chain; its full sequence is tRNA modification GTPase MnmE (450 aa).

(6S)-5-formyl-5,6,7,8-tetrahydrofolate-binding residues include R23, E81, and K120. One can recognise a TrmE-type G domain in the interval 216 to 373 (GIHLVLAGKP…LLKKIATLAG (158 aa)). GTP contacts are provided by residues 226 to 231 (NAGKSS), 245 to 251 (TPQAGTT), 270 to 273 (DTAG), and 337 to 340 (NKAD). Positions 230 and 251 each coordinate Mg(2+). K450 contributes to the (6S)-5-formyl-5,6,7,8-tetrahydrofolate binding site.

The protein belongs to the TRAFAC class TrmE-Era-EngA-EngB-Septin-like GTPase superfamily. TrmE GTPase family. Homodimer. Heterotetramer of two MnmE and two MnmG subunits. K(+) is required as a cofactor.

Its subcellular location is the cytoplasm. Exhibits a very high intrinsic GTPase hydrolysis rate. Involved in the addition of a carboxymethylaminomethyl (cmnm) group at the wobble position (U34) of certain tRNAs, forming tRNA-cmnm(5)s(2)U34. In Dichelobacter nodosus (strain VCS1703A), this protein is tRNA modification GTPase MnmE.